The sequence spans 205 residues: ATP-dependent Clp protease proteolytic subunit (205 aa).

Serine 108 serves as the catalytic Nucleophile. Histidine 133 is an active-site residue.

The protein belongs to the peptidase S14 family. As to quaternary structure, fourteen ClpP subunits assemble into 2 heptameric rings which stack back to back to give a disk-like structure with a central cavity, resembling the structure of eukaryotic proteasomes.

It is found in the cytoplasm. The catalysed reaction is Hydrolysis of proteins to small peptides in the presence of ATP and magnesium. alpha-casein is the usual test substrate. In the absence of ATP, only oligopeptides shorter than five residues are hydrolyzed (such as succinyl-Leu-Tyr-|-NHMec, and Leu-Tyr-Leu-|-Tyr-Trp, in which cleavage of the -Tyr-|-Leu- and -Tyr-|-Trp bonds also occurs).. In terms of biological role, cleaves peptides in various proteins in a process that requires ATP hydrolysis. Has a chymotrypsin-like activity. Plays a major role in the degradation of misfolded proteins. In Alcanivorax borkumensis (strain ATCC 700651 / DSM 11573 / NCIMB 13689 / SK2), this protein is ATP-dependent Clp protease proteolytic subunit.